A 561-amino-acid polypeptide reads, in one-letter code: DNA ligase B (561 aa).

K125 serves as the catalytic N6-AMP-lysine intermediate.

It belongs to the NAD-dependent DNA ligase family. LigB subfamily.

It carries out the reaction NAD(+) + (deoxyribonucleotide)n-3'-hydroxyl + 5'-phospho-(deoxyribonucleotide)m = (deoxyribonucleotide)n+m + AMP + beta-nicotinamide D-nucleotide.. Functionally, catalyzes the formation of phosphodiester linkages between 5'-phosphoryl and 3'-hydroxyl groups in double-stranded DNA using NAD as a coenzyme and as the energy source for the reaction. In Salmonella agona (strain SL483), this protein is DNA ligase B.